The sequence spans 305 residues: Epoxyqueuosine reductase (305 aa).

Asp-128 acts as the Proton donor in catalysis. A 4Fe-4S ferredoxin-type domain is found at 170–202; that stretch reads LSLTSDTPHAKYCGTCRKCLDICPTKAIVHPFV. The [4Fe-4S] cluster site is built by Cys-182, Cys-185, Cys-188, Cys-192, Cys-208, Cys-236, Cys-239, and Cys-243.

The protein belongs to the QueG family. In terms of assembly, monomer. Cob(II)alamin is required as a cofactor. The cofactor is [4Fe-4S] cluster.

It localises to the cytoplasm. The catalysed reaction is epoxyqueuosine(34) in tRNA + AH2 = queuosine(34) in tRNA + A + H2O. It functions in the pathway tRNA modification; tRNA-queuosine biosynthesis. Catalyzes the conversion of epoxyqueuosine (oQ) to queuosine (Q), which is a hypermodified base found in the wobble positions of tRNA(Asp), tRNA(Asn), tRNA(His) and tRNA(Tyr). In Atelocyanobacterium thalassa (isolate ALOHA), this protein is Epoxyqueuosine reductase.